The following is a 208-amino-acid chain: LexA repressor (208 aa).

Residues 30–50 (VREIGKSVGLSSSSTVAAYLE) constitute a DNA-binding region (H-T-H motif). Residues S129 and K167 each act as for autocatalytic cleavage activity in the active site.

This sequence belongs to the peptidase S24 family. In terms of assembly, homodimer.

The catalysed reaction is Hydrolysis of Ala-|-Gly bond in repressor LexA.. Represses a number of genes involved in the response to DNA damage (SOS response), including recA and lexA. In the presence of single-stranded DNA, RecA interacts with LexA causing an autocatalytic cleavage which disrupts the DNA-binding part of LexA, leading to derepression of the SOS regulon and eventually DNA repair. In Lacticaseibacillus casei (strain BL23) (Lactobacillus casei), this protein is LexA repressor.